We begin with the raw amino-acid sequence, 276 residues long: Insulin-induced gene 1 protein (276 aa).

Disordered regions lie at residues 1–26 (MPRLDDHLWRGPCAKGTKHRSHPRAS) and 49–73 (AAHGALGTDPAHGPQSAGVGGQGSS). Residues 1–83 (MPRLDDHLWR…SHVNSWHHHL (83 aa)) lie on the Cytoplasmic side of the membrane. Over residues 16 to 25 (GTKHRSHPRA) the composition is skewed to basic residues. A helical transmembrane segment spans residues 84-106 (VQRSLVLFSVGVVLALVLNLLQV). At 107–125 (QRNVTLFPDEVIATIFSSA) the chain is on the extracellular side. The chain crosses the membrane as a helical span at residues 126–143 (WWVPPCCGTAAAVVGLLY). The Cytoplasmic portion of the chain corresponds to 144–158 (PCIDSHLGEPHKFKR). Residues Lys-155 and Lys-157 each participate in a glycyl lysine isopeptide (Lys-Gly) (interchain with G-Cter in ubiquitin) cross-link. Residues 159-181 (EWASVMRCVAVFVGINHASAKLD) form a helical membrane-spanning segment. Residues 182-184 (FAN) lie on the Extracellular side of the membrane. The chain crosses the membrane as a helical span at residues 185 to 203 (NVQLSLTLAALSLGLWWTF). Topologically, residues 204 to 208 (DRSRS) are cytoplasmic. Ser-206 is subject to Phosphoserine. Residues 209–230 (GLGLGITIAFLATLITQLLVYN) traverse the membrane as a helical segment. Topologically, residues 231 to 244 (GVYQYTSPDFLYIR) are extracellular. A helical membrane pass occupies residues 245 to 262 (SWLPCIFFSGGVTVGNIG). The Cytoplasmic portion of the chain corresponds to 263-276 (RQLAMGVPEKPHSD). The KxHxx signature appears at 270-276 (PEKPHSD).

This sequence belongs to the INSIG family. As to quaternary structure, interacts with SCAP; interaction is direct and only takes place in the presence of sterols; it prevents interaction between SCAP and the coat protein complex II (COPII). Associates with the SCAP-SREBP complex (composed of SCAP and SREBF1/SREBP1 or SREBF2/SREBP2); association is mediated via its interaction with SCAP and only takes place in the presence of sterols. Interaction with SCAP is mutually exclusive with PAQR3. Interacts with HMGCR (via its SSD); the interaction, accelerated by sterols, leads to the recruitment of HMGCR to AMFR/gp78 for its ubiquitination by the sterol-mediated ERAD pathway. Interacts with AMFR/gp78 (via its membrane domain); the interaction recruits HMCR at the ER membrane for its ubiquitination and degradation by the sterol-mediated ERAD pathway. Interacts with SOAT2/ACAT2; leading to promote recruitment of AMFR/gp78 and subsequent ubiquitination of SOAT2/ACAT2. Interacts with RNF139. Interacts with RNF145. Phosphorylation at Ser-206 by PCK1 reduces binding to oxysterol, disrupting the interaction between INSIG1 and SCAP, thereby promoting nuclear translocation of SREBP proteins (SREBF1/SREBP1 or SREBF2/SREBP2) and subsequent transcription of downstream lipogenesis-related genes. Post-translationally, ubiquitinated by AMFR/gp78 in response to sterol deprivation, leading to its degradation: when the SCAP-SREBP complex becomes dissociated from INSIG1, INSIG1 is then ubiquitinated and degraded in proteasomes. Although ubiquitination is required for rapid INSIG1 degradation, it is not required for release of the SCAP-SREBP complex. Ubiquitinated by RNF139.

The protein localises to the endoplasmic reticulum membrane. Functionally, oxysterol-binding protein that mediates feedback control of cholesterol synthesis by controlling both endoplasmic reticulum to Golgi transport of SCAP and degradation of HMGCR. Acts as a negative regulator of cholesterol biosynthesis by mediating the retention of the SCAP-SREBP complex in the endoplasmic reticulum, thereby blocking the processing of sterol regulatory element-binding proteins (SREBPs) SREBF1/SREBP1 and SREBF2/SREBP2. Binds oxysterol, including 25-hydroxycholesterol, regulating interaction with SCAP and retention of the SCAP-SREBP complex in the endoplasmic reticulum. In presence of oxysterol, interacts with SCAP, retaining the SCAP-SREBP complex in the endoplasmic reticulum, thereby preventing SCAP from escorting SREBF1/SREBP1 and SREBF2/SREBP2 to the Golgi. Sterol deprivation or phosphorylation by PCK1 reduce oxysterol-binding, disrupting the interaction between INSIG1 and SCAP, thereby promoting Golgi transport of the SCAP-SREBP complex, followed by processing and nuclear translocation of SREBF1/SREBP1 and SREBF2/SREBP2. Also regulates cholesterol synthesis by regulating degradation of HMGCR: initiates the sterol-mediated ubiquitin-mediated endoplasmic reticulum-associated degradation (ERAD) of HMGCR via recruitment of the reductase to the ubiquitin ligases AMFR/gp78 and/or RNF139. Also regulates degradation of SOAT2/ACAT2 when the lipid levels are low: initiates the ubiquitin-mediated degradation of SOAT2/ACAT2 via recruitment of the ubiquitin ligases AMFR/gp78. This is Insulin-induced gene 1 protein from Bos taurus (Bovine).